Here is a 280-residue protein sequence, read N- to C-terminus: Chaperone for lacto-N-biosidase (280 aa).

Positions 1-37 (MPRRHRFAAAIAAVAVAAVLLVTLTVAVVTHGDGAFA) are cleaved as a signal peptide.

As to quaternary structure, homodimer.

Its subcellular location is the secreted. Chaperone required for active expression of the lacto-N-biosidase LnbX. The polypeptide is Chaperone for lacto-N-biosidase (Bifidobacterium longum subsp. longum (strain ATCC 15707 / DSM 20219 / JCM 1217 / NCTC 11818 / E194b)).